A 272-amino-acid polypeptide reads, in one-letter code: Ribosomal RNA small subunit methyltransferase A (272 aa).

Positions 13, 15, 40, 61, 85, and 105 each coordinate S-adenosyl-L-methionine.

Belongs to the class I-like SAM-binding methyltransferase superfamily. rRNA adenine N(6)-methyltransferase family. RsmA subfamily.

The protein localises to the cytoplasm. It catalyses the reaction adenosine(1518)/adenosine(1519) in 16S rRNA + 4 S-adenosyl-L-methionine = N(6)-dimethyladenosine(1518)/N(6)-dimethyladenosine(1519) in 16S rRNA + 4 S-adenosyl-L-homocysteine + 4 H(+). Its function is as follows. Specifically dimethylates two adjacent adenosines (A1518 and A1519) in the loop of a conserved hairpin near the 3'-end of 16S rRNA in the 30S particle. May play a critical role in biogenesis of 30S subunits. This chain is Ribosomal RNA small subunit methyltransferase A, found in Bacteroides fragilis (strain ATCC 25285 / DSM 2151 / CCUG 4856 / JCM 11019 / LMG 10263 / NCTC 9343 / Onslow / VPI 2553 / EN-2).